Reading from the N-terminus, the 822-residue chain is DNA gyrase subunit A (822 aa).

The 466-residue stretch at 32 to 497 (LPDVRDGLKP…QVLSLEDEDL (466 aa)) folds into the Topo IIA-type catalytic domain. Tyrosine 120 serves as the catalytic O-(5'-phospho-DNA)-tyrosine intermediate. The short motif at 524 to 530 (QKRGGRG) is the GyrA-box element.

It belongs to the type II topoisomerase GyrA/ParC subunit family. In terms of assembly, heterotetramer, composed of two GyrA and two GyrB chains. In the heterotetramer, GyrA contains the active site tyrosine that forms a transient covalent intermediate with DNA, while GyrB binds cofactors and catalyzes ATP hydrolysis.

The protein localises to the cytoplasm. It catalyses the reaction ATP-dependent breakage, passage and rejoining of double-stranded DNA.. Its function is as follows. A type II topoisomerase that negatively supercoils closed circular double-stranded (ds) DNA in an ATP-dependent manner to modulate DNA topology and maintain chromosomes in an underwound state. Negative supercoiling favors strand separation, and DNA replication, transcription, recombination and repair, all of which involve strand separation. Also able to catalyze the interconversion of other topological isomers of dsDNA rings, including catenanes and knotted rings. Type II topoisomerases break and join 2 DNA strands simultaneously in an ATP-dependent manner. In Streptococcus pneumoniae serotype 4 (strain ATCC BAA-334 / TIGR4), this protein is DNA gyrase subunit A.